Reading from the N-terminus, the 126-residue chain is Large ribosomal subunit protein bL12 (126 aa).

This sequence belongs to the bacterial ribosomal protein bL12 family. Homodimer. Part of the ribosomal stalk of the 50S ribosomal subunit. Forms a multimeric L10(L12)X complex, where L10 forms an elongated spine to which 2 to 4 L12 dimers bind in a sequential fashion. Binds GTP-bound translation factors.

In terms of biological role, forms part of the ribosomal stalk which helps the ribosome interact with GTP-bound translation factors. Is thus essential for accurate translation. This Beijerinckia indica subsp. indica (strain ATCC 9039 / DSM 1715 / NCIMB 8712) protein is Large ribosomal subunit protein bL12.